Consider the following 207-residue polypeptide: Thiamine-phosphate synthase (207 aa).

4-amino-2-methyl-5-(diphosphooxymethyl)pyrimidine is bound by residues 37 to 41 and asparagine 69; that span reads QLREK. Positions 70 and 89 each coordinate Mg(2+). Serine 108 is a 4-amino-2-methyl-5-(diphosphooxymethyl)pyrimidine binding site. 134 to 136 contributes to the 2-[(2R,5Z)-2-carboxy-4-methylthiazol-5(2H)-ylidene]ethyl phosphate binding site; sequence TGS. A 4-amino-2-methyl-5-(diphosphooxymethyl)pyrimidine-binding site is contributed by lysine 137. Residues glycine 165 and 185–186 each bind 2-[(2R,5Z)-2-carboxy-4-methylthiazol-5(2H)-ylidene]ethyl phosphate; that span reads IS.

The protein belongs to the thiamine-phosphate synthase family. Requires Mg(2+) as cofactor.

It catalyses the reaction 2-[(2R,5Z)-2-carboxy-4-methylthiazol-5(2H)-ylidene]ethyl phosphate + 4-amino-2-methyl-5-(diphosphooxymethyl)pyrimidine + 2 H(+) = thiamine phosphate + CO2 + diphosphate. The enzyme catalyses 2-(2-carboxy-4-methylthiazol-5-yl)ethyl phosphate + 4-amino-2-methyl-5-(diphosphooxymethyl)pyrimidine + 2 H(+) = thiamine phosphate + CO2 + diphosphate. It carries out the reaction 4-methyl-5-(2-phosphooxyethyl)-thiazole + 4-amino-2-methyl-5-(diphosphooxymethyl)pyrimidine + H(+) = thiamine phosphate + diphosphate. It functions in the pathway cofactor biosynthesis; thiamine diphosphate biosynthesis; thiamine phosphate from 4-amino-2-methyl-5-diphosphomethylpyrimidine and 4-methyl-5-(2-phosphoethyl)-thiazole: step 1/1. Condenses 4-methyl-5-(beta-hydroxyethyl)thiazole monophosphate (THZ-P) and 2-methyl-4-amino-5-hydroxymethyl pyrimidine pyrophosphate (HMP-PP) to form thiamine monophosphate (TMP). The chain is Thiamine-phosphate synthase from Desulfitobacterium hafniense (strain DSM 10664 / DCB-2).